We begin with the raw amino-acid sequence, 359 residues long: Type-1 angiotensin II receptor (359 aa).

The Extracellular segment spans residues Met1–Asn25. Asn4 carries N-linked (GlcNAc...) asparagine glycosylation. Residues Gln15 and Asp17 each contribute to the angiotensin II site. 2 cysteine pairs are disulfide-bonded: Cys18/Cys274 and Cys101/Cys180. A helical membrane pass occupies residues Tyr26–Phe55. Over Tyr56–Thr61 the chain is Cytoplasmic. Residues Val62–Ala89 traverse the membrane as a helical segment. Residues Met90 to Asn98 are Extracellular-facing. Residues Tyr99–Asp125 form a helical membrane-spanning segment. Over Arg126–Thr141 the chain is Cytoplasmic. Residues Met142–Ile165 form a helical membrane-spanning segment. The Extracellular portion of the chain corresponds to His166 to Thr190. Arg167 contributes to the angiotensin II binding site. Asn176 is a glycosylation site (N-linked (GlcNAc...) asparagine). Residues Phe182, His183, and Tyr184 each contribute to the angiotensin II site. Residue Asn188 is glycosylated (N-linked (GlcNAc...) asparagine). A helical membrane pass occupies residues Leu191–Thr216. Lys199 is an angiotensin II binding site. Topologically, residues Leu217–Phe239 are cytoplasmic. Residues Lys240–Leu268 form a helical membrane-spanning segment. Residues Gly269–Asp278 lie on the Extracellular side of the membrane. Residues Ile279 to Phe304 traverse the membrane as a helical segment. Residues Leu305–Glu359 lie on the Cytoplasmic side of the membrane. Positions Ser335–Lys350 are enriched in polar residues. The interval Ser335–Glu359 is disordered. A lipid anchor (S-palmitoyl cysteine) is attached at Cys355.

It belongs to the G-protein coupled receptor 1 family. In terms of assembly, interacts with MAS1. Interacts with ARRB1. Interacts with FLNA (via filamin repeat 21); increases PKA-mediated phosphorylation of FLNA. Post-translationally, C-terminal Ser or Thr residues may be phosphorylated.

It is found in the cell membrane. Functionally, receptor for angiotensin II, a vasoconstricting peptide, which acts as a key regulator of blood pressure and sodium retention by the kidney. The activated receptor in turn couples to G-alpha proteins G(q) (GNAQ, GNA11, GNA14 or GNA15) and thus activates phospholipase C and increases the cytosolic Ca(2+) concentrations, which in turn triggers cellular responses such as stimulation of protein kinase C. This Ovis aries (Sheep) protein is Type-1 angiotensin II receptor (AGTR1).